The primary structure comprises 466 residues: ATP synthase subunit beta (466 aa).

155–162 contributes to the ATP binding site; the sequence is GGAGVGKT.

It belongs to the ATPase alpha/beta chains family. F-type ATPases have 2 components, CF(1) - the catalytic core - and CF(0) - the membrane proton channel. CF(1) has five subunits: alpha(3), beta(3), gamma(1), delta(1), epsilon(1). CF(0) has three main subunits: a(1), b(2) and c(9-12). The alpha and beta chains form an alternating ring which encloses part of the gamma chain. CF(1) is attached to CF(0) by a central stalk formed by the gamma and epsilon chains, while a peripheral stalk is formed by the delta and b chains.

It is found in the cell inner membrane. The catalysed reaction is ATP + H2O + 4 H(+)(in) = ADP + phosphate + 5 H(+)(out). In terms of biological role, produces ATP from ADP in the presence of a proton gradient across the membrane. The catalytic sites are hosted primarily by the beta subunits. This is ATP synthase subunit beta from Bordetella bronchiseptica (strain ATCC BAA-588 / NCTC 13252 / RB50) (Alcaligenes bronchisepticus).